The chain runs to 239 residues: Adenylate dimethylallyltransferase (239 aa).

Belongs to the isopentenyl transferase family.

It carries out the reaction dimethylallyl diphosphate + AMP = N(6)-(dimethylallyl)adenosine 5'-phosphate + diphosphate. Its function is as follows. Transfers dimethylallyl groups to AMP as part of the biosynthesis of cytokinin phytohormones. In Rhizobium radiobacter (Agrobacterium tumefaciens), this protein is Adenylate dimethylallyltransferase (ipt).